Here is a 239-residue protein sequence, read N- to C-terminus: 4-hydroxy-tetrahydrodipicolinate reductase (239 aa).

NAD(+)-binding positions include 8 to 13 (GSTGKM), 78 to 80 (GTT), and 102 to 105 (SANM). The Proton donor/acceptor role is filled by His134. His135 contributes to the (S)-2,3,4,5-tetrahydrodipicolinate binding site. Lys138 functions as the Proton donor in the catalytic mechanism. 144–145 (GT) is a (S)-2,3,4,5-tetrahydrodipicolinate binding site.

It belongs to the DapB family.

Its subcellular location is the cytoplasm. The enzyme catalyses (S)-2,3,4,5-tetrahydrodipicolinate + NAD(+) + H2O = (2S,4S)-4-hydroxy-2,3,4,5-tetrahydrodipicolinate + NADH + H(+). The catalysed reaction is (S)-2,3,4,5-tetrahydrodipicolinate + NADP(+) + H2O = (2S,4S)-4-hydroxy-2,3,4,5-tetrahydrodipicolinate + NADPH + H(+). It participates in amino-acid biosynthesis; L-lysine biosynthesis via DAP pathway; (S)-tetrahydrodipicolinate from L-aspartate: step 4/4. Its function is as follows. Catalyzes the conversion of 4-hydroxy-tetrahydrodipicolinate (HTPA) to tetrahydrodipicolinate. This Rickettsia africae (strain ESF-5) protein is 4-hydroxy-tetrahydrodipicolinate reductase.